We begin with the raw amino-acid sequence, 398 residues long: Phosphoglycerate kinase (398 aa).

Substrate contacts are provided by residues 21–23, Arg-41, 64–67, Arg-123, and Arg-156; these read DFN and HLGR. Residues Lys-207, Gly-294, Glu-325, and 354 to 357 contribute to the ATP site; that span reads GGDS.

This sequence belongs to the phosphoglycerate kinase family. Monomer.

It localises to the cytoplasm. It carries out the reaction (2R)-3-phosphoglycerate + ATP = (2R)-3-phospho-glyceroyl phosphate + ADP. It functions in the pathway carbohydrate degradation; glycolysis; pyruvate from D-glyceraldehyde 3-phosphate: step 2/5. This is Phosphoglycerate kinase from Salinibacter ruber (strain DSM 13855 / M31).